The sequence spans 341 residues: Alanine racemase (341 aa).

The active-site Proton acceptor; specific for D-alanine is the K33. K33 is modified (N6-(pyridoxal phosphate)lysine). R126 serves as a coordination point for substrate. Residue Y236 is the Proton acceptor; specific for L-alanine of the active site. Residue M284 participates in substrate binding.

This sequence belongs to the alanine racemase family. Pyridoxal 5'-phosphate serves as cofactor.

The enzyme catalyses L-alanine = D-alanine. It functions in the pathway amino-acid biosynthesis; D-alanine biosynthesis; D-alanine from L-alanine: step 1/1. In terms of biological role, catalyzes the interconversion of L-alanine and D-alanine. In Aquifex pyrophilus, this protein is Alanine racemase (alr).